The following is a 1479-amino-acid chain: Chromosome partition protein MukB (1479 aa).

34–41 provides a ligand contact to ATP; sequence GGNGAGKS. Coiled coils occupy residues 337 to 418, 511 to 604, 780 to 810, 847 to 1116, and 1206 to 1265; these read LNLV…QYQQ, QAER…APVW, RAAREMRLEGLRDEREALAEQYATLSFDVQK, ELDR…AKAG, and DDPV…LQAV. The tract at residues 666-783 is flexible hinge; that stretch reads PGGSEDPRLN…EVPLFGRAAR (118 aa).

Belongs to the SMC family. MukB subfamily. As to quaternary structure, homodimerization via its hinge domain. Binds to DNA via its C-terminal region. Interacts, and probably forms a ternary complex, with MukE and MukF via its C-terminal region. The complex formation is stimulated by calcium or magnesium. Interacts with tubulin-related protein FtsZ.

The protein resides in the cytoplasm. The protein localises to the nucleoid. Functionally, plays a central role in chromosome condensation, segregation and cell cycle progression. Functions as a homodimer, which is essential for chromosome partition. Involved in negative DNA supercoiling in vivo, and by this means organize and compact chromosomes. May achieve or facilitate chromosome segregation by condensation DNA from both sides of a centrally located replisome during cell division. This is Chromosome partition protein MukB from Pectobacterium atrosepticum (strain SCRI 1043 / ATCC BAA-672) (Erwinia carotovora subsp. atroseptica).